The following is a 256-amino-acid chain: Bialaphos biosynthetic pathway regulatory protein (256 aa).

The region spanning 184 to 249 (ETADAIDVSD…QLGARAAECR (66 aa)) is the HTH luxR-type domain. A DNA-binding region (H-T-H motif) is located at residues 208-227 (DVAMARSLGISTRTLRRVIT).

Its function is as follows. Involved in the regulation of the biosynthesis of phosphinothricin tripeptide (PTT), also known as bialaphos (BA), a natural-product antibiotic and potent herbicide. The chain is Bialaphos biosynthetic pathway regulatory protein (brpA) from Streptomyces hygroscopicus.